The following is a 428-amino-acid chain: Tyrosine--tRNA ligase (428 aa).

Tyr34 contributes to the L-tyrosine binding site. Positions 39–48 (PTADSLHIGH) match the 'HIGH' region motif. Positions 171 and 175 each coordinate L-tyrosine. A 'KMSKS' region motif is present at residues 236-240 (KFGKT). Lys239 lines the ATP pocket. Positions 358–424 (VGLIDLLVDA…GKKKYFLIQV (67 aa)) constitute an S4 RNA-binding domain.

This sequence belongs to the class-I aminoacyl-tRNA synthetase family. TyrS type 1 subfamily. As to quaternary structure, homodimer.

It localises to the cytoplasm. The enzyme catalyses tRNA(Tyr) + L-tyrosine + ATP = L-tyrosyl-tRNA(Tyr) + AMP + diphosphate + H(+). Its function is as follows. Catalyzes the attachment of tyrosine to tRNA(Tyr) in a two-step reaction: tyrosine is first activated by ATP to form Tyr-AMP and then transferred to the acceptor end of tRNA(Tyr). The protein is Tyrosine--tRNA ligase of Oceanobacillus iheyensis (strain DSM 14371 / CIP 107618 / JCM 11309 / KCTC 3954 / HTE831).